A 75-amino-acid polypeptide reads, in one-letter code: Movement protein TGBp3 (75 aa).

Residues 1-2 lie on the Lumenal side of the membrane; it reads MR. The helical transmembrane segment at 3–23 threads the bilayer; sequence VLDLILALITAAVVGYTIALV. The Cytoplasmic segment spans residues 24-75; that stretch reads SNSGCYVHFDGRSATTTCPPGPWVESIANGLYTAGLARPHPEPECERRQSSW.

It belongs to the Tymovirales TGBp3 protein family.

Its subcellular location is the host endoplasmic reticulum membrane. Its function is as follows. Plays a role in viral cell-to-cell propagation, by facilitating genome transport to neighboring plant cells through plasmosdesmata. May induce the formation of granular vesicles derived from the Endoplasmic reticulum, which align on actin filaments. This chain is Movement protein TGBp3, found in Strawberry mild yellow edge-associated virus (SMYEaV).